Here is a 455-residue protein sequence, read N- to C-terminus: tRNA modification GTPase MnmE (455 aa).

The (6S)-5-formyl-5,6,7,8-tetrahydrofolate site is built by R26, E86, and R125. One can recognise a TrmE-type G domain in the interval 222-376 (GLKTAIIGRP…VEEKINQIFF (155 aa)). Residue N232 coordinates K(+). GTP-binding positions include 232 to 237 (NVGKSS), 251 to 257 (TDIAGTT), and 276 to 279 (DTAG). Residue S236 coordinates Mg(2+). K(+)-binding residues include T251, I253, and T256. Residue T257 participates in Mg(2+) binding. K455 contributes to the (6S)-5-formyl-5,6,7,8-tetrahydrofolate binding site.

The protein belongs to the TRAFAC class TrmE-Era-EngA-EngB-Septin-like GTPase superfamily. TrmE GTPase family. In terms of assembly, homodimer. Heterotetramer of two MnmE and two MnmG subunits. The cofactor is K(+).

The protein resides in the cytoplasm. Its function is as follows. Exhibits a very high intrinsic GTPase hydrolysis rate. Involved in the addition of a carboxymethylaminomethyl (cmnm) group at the wobble position (U34) of certain tRNAs, forming tRNA-cmnm(5)s(2)U34. This chain is tRNA modification GTPase MnmE, found in Lactococcus lactis subsp. cremoris (strain SK11).